Reading from the N-terminus, the 140-residue chain is MLSPKRTRFRKQHRGRMKGVSTRGNRICFGKFALQALEPAWITARQIEAGRRVIARYARRGGKMWIRIFPDKPITMRPAETRMGSGKGSPEYWVAVVKKGRILYEINGVSEKMAQAAMKIAAHKMPIHTKFITLSQLTNG.

The protein belongs to the universal ribosomal protein uL16 family. Part of the 50S ribosomal subunit.

Its subcellular location is the plastid. It localises to the chloroplast. In Psilotum nudum (Whisk fern), this protein is Large ribosomal subunit protein uL16c.